The primary structure comprises 550 residues: Mycosin-2 (550 aa).

Residues M1–A33 form the signal peptide. Residues I34 to C62 are disordered. One can recognise a Peptidase S8 domain in the interval G79–L490. Residues D103 and H133 each act as charge relay system in the active site. Residues P168 to V190 show a composition bias toward pro residues. Residues P168 to G236 form a disordered region. Residue S435 is the Charge relay system of the active site. The helical transmembrane segment at N524–A544 threads the bilayer.

Belongs to the peptidase S8 family.

It localises to the cell membrane. This is Mycosin-2 from Mycobacterium tuberculosis (strain ATCC 25618 / H37Rv).